A 682-amino-acid polypeptide reads, in one-letter code: MTTNDLFSIYAFSNMYDIFPRKYSQKELEEYHRKNPLFFSYTIFPVIKHRWSKAYICFQNNVYMLNIELDTSKPYDRVPIQHLIDIRPISTDIKKEIYKISDKTFITFECYSYLKCKGYNSIYDITLDDKRGLLSAGNILSIFSSNKQMPEKSSIGILKNPKPFTVIKFKSLSLITQLQIFELLRKRKQIVVTGSTGIGKTSQLPKVIMWYNYLFGGWDNLDRVRFDYISRPIVLSLPRVALVKSNGINFLQSLGFSDFEGSPVELRYGGKTEHTTRQHDGIVLSTNKLTSYSLSNYNIIIVDEIHEHDRIADIIISVLRKNIDTIHSLVLMSATLEDDRDRLQEFLPDVEFYHIEGPVLYSIKEIYVKNKYSYDSKAYTEEEKKNISTTLNWCRPRNGMCGILFLASVSQCISYKKYLEKSNSDMDFIIIHGKIPDITEVLNAVQRPGRERPCILVSTPYLESSITIRTATHVYDTGRVYVPKPFGGDQLFISKSMMTQRKGRVGRVSKGIYVYFYDMCLLKPIKSIDHEFLYEYIVYAKKFKLSLPNDLLVIPSDKDMLKKSEEYIKSFNISFDRLFEIYVNYFVNMVEYVKIYNKGGKKAENLDMFERNDILTGETLKDIKNLQLLVKINTTTRRKKMYCYKGEILFGPYMNTVIRLSSKQLYRNYVYMLTERSFTLYR.

The Helicase ATP-binding domain occupies 181 to 354; sequence FELLRKRKQI…EFLPDVEFYH (174 aa). Residue 194 to 201 coordinates ATP; that stretch reads GSTGIGKT. The short motif at 303–306 is the DEXH box element; the sequence is DEIH. In terms of domain architecture, Helicase C-terminal spans 386-551; it reads NISTTLNWCR…KFKLSLPNDL (166 aa).

The protein belongs to the DEAD box helicase family. DEAH subfamily. In terms of assembly, monomer.

It localises to the virion. The enzyme catalyses ATP + H2O = ADP + phosphate + H(+). Functionally, NTP-dependent helicase that catalyzes unidirectional unwinding of 3'tailed duplex RNAs and plays an important role during transcription of early mRNAs, presumably by preventing R-loop formation behind the elongating RNA polymerase. Might also play a role in the export of newly synthesized mRNA chains out of the core into the cytoplasm. Required for replication and propagation of viral particles. The protein is RNA helicase NPH-II (NPH2) of Vertebrata (FPV).